Here is a 175-residue protein sequence, read N- to C-terminus: Peptide deformylase (175 aa).

Fe cation is bound by residues C96 and H138. E139 is a catalytic residue. H142 contributes to the Fe cation binding site.

Belongs to the polypeptide deformylase family. The cofactor is Fe(2+).

It carries out the reaction N-terminal N-formyl-L-methionyl-[peptide] + H2O = N-terminal L-methionyl-[peptide] + formate. Its function is as follows. Removes the formyl group from the N-terminal Met of newly synthesized proteins. Requires at least a dipeptide for an efficient rate of reaction. N-terminal L-methionine is a prerequisite for activity but the enzyme has broad specificity at other positions. This Rhodopseudomonas palustris (strain BisB18) protein is Peptide deformylase.